A 109-amino-acid chain; its full sequence is Staphostatin B (109 aa).

The interval 97–101 (IGTSR) is binds to staphopain B.

The protein belongs to the protease inhibitor I57 (SspC) family. Forms a stable non-covalent complex with prematurely activated/folded SspB.

The protein localises to the cytoplasm. Its function is as follows. Specifically inhibits the cysteine protease staphopain B (SspB) by blocking the active site of the enzyme. Probably required to protect cytoplasmic proteins from being degraded by prematurely activated/folded prostaphopain B. Also involved in growth capacity, viability and bacterial morphology. In Staphylococcus aureus (strain Mu50 / ATCC 700699), this protein is Staphostatin B (sspC).